The sequence spans 214 residues: Alkaline phosphatase-like protein (214 aa).

The next 4 helical transmembrane spans lie at 3–23, 48–68, 141–161, and 177–197; these read EIII…LIMI, LGII…ALIL, FLIL…SLGA, and YSSV…LLFV.

This sequence belongs to the DedA family.

It localises to the cell membrane. The chain is Alkaline phosphatase-like protein (apl) from Lactococcus lactis subsp. cremoris (strain MG1363).